Here is a 93-residue protein sequence, read N- to C-terminus: Small ribosomal subunit protein uS19 (93 aa).

This sequence belongs to the universal ribosomal protein uS19 family.

In terms of biological role, protein S19 forms a complex with S13 that binds strongly to the 16S ribosomal RNA. The sequence is that of Small ribosomal subunit protein uS19 from Mycobacterium marinum (strain ATCC BAA-535 / M).